Here is a 122-residue protein sequence, read N- to C-terminus: Large ribosomal subunit protein uL14 (122 aa).

This sequence belongs to the universal ribosomal protein uL14 family. As to quaternary structure, part of the 50S ribosomal subunit. Forms a cluster with proteins L3 and L19. In the 70S ribosome, L14 and L19 interact and together make contacts with the 16S rRNA in bridges B5 and B8.

Functionally, binds to 23S rRNA. Forms part of two intersubunit bridges in the 70S ribosome. The protein is Large ribosomal subunit protein uL14 of Gemmatimonas aurantiaca (strain DSM 14586 / JCM 11422 / NBRC 100505 / T-27).